The primary structure comprises 340 residues: MNAVSMTVIGAGSYGTALAIAFARNGHHVLLWGYNPQHVRELQIHRCNQAFLPDVQFPDNLSPEASLETAITASRNILIAVPSHVFHQVLYNIQPYLNQHSRIIWATKGLEHGTGRLLQEVAREILGDKIPLAIFSGPTFAKELAIGLPTAITVAASNAEFSEELQQLFHCDKSFRVYKNPDMIGVQLGGVIKNVIAIGAGISDGMGFGANARIALITRGLAEISRLGIAMGAELSTFMGMTGLGDLVLTCTDNQSRNRRFGILLGQGMDIEEAEKQIGQIVEGYLNTKEVRMLARRIGVEMPITEQIYHVLYSGKSVVEAANTLLSRTLKDEIHDKVCF.

NADPH is bound by residues Ser-13, Tyr-14, and Lys-108. Lys-108, Gly-137, and Thr-139 together coordinate sn-glycerol 3-phosphate. Ala-141 contacts NADPH. Sn-glycerol 3-phosphate is bound by residues Lys-193, Asp-246, Ser-256, Arg-257, and Asn-258. Lys-193 (proton acceptor) is an active-site residue. Arg-257 provides a ligand contact to NADPH. NADPH-binding residues include Ile-281 and Glu-283.

Belongs to the NAD-dependent glycerol-3-phosphate dehydrogenase family.

The protein localises to the cytoplasm. The catalysed reaction is sn-glycerol 3-phosphate + NAD(+) = dihydroxyacetone phosphate + NADH + H(+). It carries out the reaction sn-glycerol 3-phosphate + NADP(+) = dihydroxyacetone phosphate + NADPH + H(+). The protein operates within membrane lipid metabolism; glycerophospholipid metabolism. Catalyzes the reduction of the glycolytic intermediate dihydroxyacetone phosphate (DHAP) to sn-glycerol 3-phosphate (G3P), the key precursor for phospholipid synthesis. This chain is Glycerol-3-phosphate dehydrogenase [NAD(P)+], found in Bartonella quintana (strain Toulouse) (Rochalimaea quintana).